The chain runs to 20 residues: Short cationic peptide-4d (20 aa).

E20 is modified (glutamic acid 1-amide).

Expressed by the venom gland.

The protein resides in the secreted. In Cupiennius salei (American wandering spider), this protein is Short cationic peptide-4d.